Here is a 227-residue protein sequence, read N- to C-terminus: PKHD-type hydroxylase BPSS1206 (227 aa).

The region spanning 78–178 (KVFPPLFNRY…RVASFFWIQS (101 aa)) is the Fe2OG dioxygenase domain. 3 residues coordinate Fe cation: H96, D98, and H159. 2-oxoglutarate is bound at residue R169.

It depends on Fe(2+) as a cofactor. Requires L-ascorbate as cofactor.

The polypeptide is PKHD-type hydroxylase BPSS1206 (Burkholderia pseudomallei (strain K96243)).